Consider the following 367-residue polypeptide: MSVNRILVINPGSTSTKIGVFDNERPVLEETIRHDVEQIGKYKRIIDQYEFRKETILEVLHSHGINISKLNAVCGRGGLLRPIEGGTYTVNDAMLEDLKNGFSGHHASNLGGILAYEIASGLNIPAFIVDPVVVDEMEPVARISGIAGMERKSIFHALNQKAVARKVAEQLNHKYEDLNLLVTHMGGGITVGAHKKGRVIDVNNGLNGEGPFSPERAGTVPVGQLVEMCFSGEYYRDEMIKKLVGQGGLVSLIDTNDAIKVEQMVEKGDPEATLIYKAMAYQVAKEIGGASAVLHGKIDAIVLTGGLAYSKILVDEIKERVDWIADVIVHPGEDELEALAEGALRVLREEEAPKEYVVREKETVARG.

It belongs to the acetokinase family.

The protein resides in the cytoplasm. It catalyses the reaction butanoate + ATP = butanoyl phosphate + ADP. This is Probable butyrate kinase from Bacillus cereus (strain B4264).